The following is a 480-amino-acid chain: Bifunctional pantoate ligase/cytidylate kinase (480 aa).

The tract at residues Met1–Val243 is pantoate--beta-alanine ligase. Met4–His11 is a binding site for ATP. His11 acts as the Proton donor in catalysis. Gln34 serves as a coordination point for (R)-pantoate. Gln34 contributes to the beta-alanine binding site. Position 123–126 (Gly123–Asp126) interacts with ATP. Gln129 provides a ligand contact to (R)-pantoate. Residues Val152 and Leu160 to Arg163 contribute to the ATP site. The interval Phe244–Gly480 is cytidylate kinase.

This sequence in the N-terminal section; belongs to the pantothenate synthetase family. In the C-terminal section; belongs to the cytidylate kinase family. Type 1 subfamily.

Its subcellular location is the cytoplasm. It catalyses the reaction (R)-pantoate + beta-alanine + ATP = (R)-pantothenate + AMP + diphosphate + H(+). The catalysed reaction is CMP + ATP = CDP + ADP. The enzyme catalyses dCMP + ATP = dCDP + ADP. Its pathway is cofactor biosynthesis; (R)-pantothenate biosynthesis; (R)-pantothenate from (R)-pantoate and beta-alanine: step 1/1. In terms of biological role, catalyzes the condensation of pantoate with beta-alanine in an ATP-dependent reaction via a pantoyl-adenylate intermediate. Functionally, catalyzes the transfer of a phosphate group from ATP to either CMP or dCMP to form CDP or dCDP and ADP, respectively. The polypeptide is Bifunctional pantoate ligase/cytidylate kinase (Synechococcus sp. (strain CC9605)).